The chain runs to 259 residues: MKDVQNEKDTRMVPLKKVGIKDLSWPLKILLKGDGYQPTVAQISCSVDLHREKRGIHMSRFIEVLNGLEEITPHIFEKVLDDLIVTMEAKRAHLEIRFPYFVWKESPVTRKVSPLKVDCFVEAEKEKNFSFKIGVRVPVHNLCPCSKEISDYGAHNQRAFVEIHVRTRKFIWFEDLVEIAERNASVPLYTLLKRPDEKFVTERAYENPKFVEDVARDVALDLEKDPRITWYRVYVESMESIHNHNAFACVEKGDFVLEG.

The protein belongs to the GTP cyclohydrolase IV family.

It catalyses the reaction GTP + H2O = 7,8-dihydroneopterin 3'-triphosphate + formate + H(+). It participates in cofactor biosynthesis; 7,8-dihydroneopterin triphosphate biosynthesis; 7,8-dihydroneopterin triphosphate from GTP: step 1/1. In terms of biological role, converts GTP to 7,8-dihydroneopterin triphosphate. This chain is GTP cyclohydrolase FolE2, found in Thermotoga neapolitana (strain ATCC 49049 / DSM 4359 / NBRC 107923 / NS-E).